A 126-amino-acid polypeptide reads, in one-letter code: Holo-[acyl-carrier-protein] synthase (126 aa).

Mg(2+)-binding residues include Asp8 and Glu60.

This sequence belongs to the P-Pant transferase superfamily. AcpS family. Mg(2+) serves as cofactor.

The protein resides in the cytoplasm. The enzyme catalyses apo-[ACP] + CoA = holo-[ACP] + adenosine 3',5'-bisphosphate + H(+). Its function is as follows. Transfers the 4'-phosphopantetheine moiety from coenzyme A to a Ser of acyl-carrier-protein. The sequence is that of Holo-[acyl-carrier-protein] synthase from Ehrlichia canis (strain Jake).